Consider the following 204-residue polypeptide: B9 domain-containing protein 1 (204 aa).

The region spanning 9-127 is the C2 B9-type domain; sequence FLLMITGQVE…TIPMFVPEST (119 aa).

It belongs to the B9D family. As to quaternary structure, part of the tectonic-like complex (also named B9 complex).

Its subcellular location is the cytoplasm. The protein resides in the cytoskeleton. The protein localises to the cilium basal body. Functionally, component of the tectonic-like complex, a complex localized at the transition zone of primary cilia and acting as a barrier that prevents diffusion of transmembrane proteins between the cilia and plasma membranes. Required for ciliogenesis and sonic hedgehog/SHH signaling. This chain is B9 domain-containing protein 1 (B9d1), found in Mus musculus (Mouse).